The chain runs to 679 residues: Stress-70 protein, mitochondrial (679 aa).

Residues 1–46 (MISATRAAAARLVGTAASRTPAAARHQDGWNGLSHEAFRFVSRRDY) constitute a mitochondrion transit peptide. An interaction with NFS1 region spans residues 1–432 (MISATRAAAA…IQGGVLAGDV (432 aa)). Thr-63 and Asn-64 together coordinate ADP. The nucleotide-binding domain (NBD) stretch occupies residues 63–431 (TNSCVAVMEG…AIQGGVLAGD (369 aa)). Lys-76 carries the N6-acetyllysine modification. Thr-87 bears the Phosphothreonine mark. 2 positions are modified to N6-acetyllysine; alternate: Lys-135 and Lys-138. 2 positions are modified to N6-succinyllysine; alternate: Lys-135 and Lys-138. Lys-143 carries the N6-acetyllysine modification. Lys-206 carries the post-translational modification N6-acetyllysine; alternate. Lys-206 bears the N6-succinyllysine; alternate mark. Lys-206 carries the post-translational modification N6-malonyllysine; alternate. An N6-acetyllysine mark is found at Lys-234 and Lys-288. Lys-300 is subject to N6-acetyllysine; alternate. N6-succinyllysine; alternate is present on Lys-300. Residues Glu-313, Lys-316, and Ser-320 each contribute to the ADP site. The residue at position 360 (Lys-360) is an N6-acetyllysine; alternate. At Lys-360 the chain carries N6-succinyllysine; alternate. Lys-368 carries the N6-succinyllysine modification. ADP-binding residues include Gly-388 and Arg-391. Position 394 is an N6-succinyllysine (Lys-394). Residue Ser-408 is modified to Phosphoserine. Positions 432 to 441 (VTDVLLLDVT) are interdomain linker. The interaction with FXN and ISCU stretch occupies residues 432–679 (VTDVLLLDVT…QKEDQKEEKQ (248 aa)). A substrate-binding domain (SBD) region spans residues 442-679 (PLSLGIETLG…QKEDQKEEKQ (238 aa)). Arg-513 bears the Omega-N-methylarginine mark. Residues Lys-567 and Lys-600 each carry the N6-acetyllysine; alternate modification. Lys-567 and Lys-600 each carry N6-succinyllysine; alternate. Position 610 is an N6-succinyllysine (Lys-610). N6-acetyllysine is present on Lys-612. Lys-646 is modified (N6-acetyllysine; alternate). Residue Lys-646 is modified to N6-succinyllysine; alternate. The interval 656-679 (ASEREGSGSSGTGEQKEDQKEEKQ) is disordered. The segment covering 669–679 (EQKEDQKEEKQ) has biased composition (basic and acidic residues).

This sequence belongs to the heat shock protein 70 family. In terms of assembly, interacts strongly with the intermediate form of FXN and weakly with its mature form. Interacts with HSCB. Associates with the mitochondrial contact site and cristae organizing system (MICOS) complex, composed of at least MICOS10/MIC10, CHCHD3/MIC19, CHCHD6/MIC25, APOOL/MIC27, IMMT/MIC60, APOO/MIC23/MIC26 and QIL1/MIC13. This complex was also known under the names MINOS or MitOS complex. The MICOS complex associates with mitochondrial outer membrane proteins SAMM50, MTX1, MTX2 and DNAJC11, mitochondrial inner membrane protein TMEM11 and with HSPA9. Interacts with DNLZ, the interaction is required to prevent self-aggregation. Interacts with TESPA1. Interacts with PDPN. Interacts with NFU1, NFS1 and ISCU. Interacts with TP53; the interaction promotes TP53 degradation. Interacts (via SBD domain) with UBXN2A; the interaction with UBXN2A inhibits HSPA9/MOT-2 interaction with and degradation of TP53, thereby promotes TP53 translocation to the nucleus. Interacts with ITPR1 AND VDAC1; this interaction couples ITPR1 to VDAC1. Component of the TIM23 mitochondrial inner membrane pre-sequence translocase complex.

It localises to the mitochondrion. The protein resides in the nucleus. The protein localises to the nucleolus. Its subcellular location is the cytoplasm. It is found in the mitochondrion matrix. The catalysed reaction is ATP + H2O = ADP + phosphate + H(+). The chaperone activity is regulated by ATP-induced allosteric coupling of the nucleotide-binding (NBD) and substrate-binding (SBD) domains. ATP binding in the NBD leads to a conformational change in the NBD, which is transferred through the interdomain linker (IDL) to the substrate-binding domain (SBD). This elicits a reduced substrate affinity and a faster substrate exchange rate. Upon hydrolysis of ATP to ADP, the protein undergoes a conformational change that increases its affinity for substrate proteins. It cycles through repeated phases of ATP hydrolysis and nucleotide exchange, facilitating repeated cycles of substrate binding and release. Functions in collaboration with co-chaperones. Functions with the co-chaperone, DNLZ, to maintain solubility and regulate ATP hydrolysis. Nucleotide exchange factors, GRPEL1 and GRPEL2, accelerate nucleotide exchange. Functionally, mitochondrial chaperone that plays a key role in mitochondrial protein import, folding, and assembly. Plays an essential role in the protein quality control system, the correct folding of proteins, the re-folding of misfolded proteins, and the targeting of proteins for subsequent degradation. These processes are achieved through cycles of ATP binding, ATP hydrolysis, and ADP release, mediated by co-chaperones. In mitochondria, it associates with the TIM (translocase of the inner membrane) protein complex to assist in the import and folding of mitochondrial proteins. Plays an important role in mitochondrial iron-sulfur cluster (ISC) biogenesis, interacts with and stabilizes ISC cluster assembly proteins FXN, NFU1, NFS1 and ISCU. Regulates erythropoiesis via stabilization of ISC assembly. Regulates mitochondrial calcium-dependent apoptosis by coupling two calcium channels, ITPR1 and VDAC1, at the mitochondria-associated endoplasmic reticulum (ER) membrane to facilitate calcium transport from the ER lumen to the mitochondria intermembrane space, providing calcium for the downstream calcium channel MCU, which releases it into the mitochondrial matrix. Although primarily located in the mitochondria, it is also found in other cellular compartments. In the cytosol, it associates with proteins involved in signaling, apoptosis, or senescence. It may play a role in cell cycle regulation via its interaction with and promotion of degradation of TP53. May play a role in the control of cell proliferation and cellular aging. Protects against reactive oxygen species (ROS). Extracellular HSPA9 plays a cytoprotective role by preventing cell lysis following immune attack by the membrane attack complex by disrupting formation of the complex. The polypeptide is Stress-70 protein, mitochondrial (Cricetulus griseus (Chinese hamster)).